A 267-amino-acid polypeptide reads, in one-letter code: Membrane-spanning 4-domains subfamily A member 10 (267 aa).

Residues 1–56 lie on the Cytoplasmic side of the membrane; the sequence is MAGQAPTAVPGSVTGEVSRWQNLGPAQPAQKVAQPQNLVPDGHLEKALEGSDLLQK. Residues 57-77 traverse the membrane as a helical segment; that stretch reads LGGFHIAIAFAHLAFGGYLIS. At 78 to 83 the chain is on the extracellular side; the sequence is TVKNLH. A helical membrane pass occupies residues 84–104; it reads LVVLKCWYPLWGTVSFLVAGM. The Cytoplasmic portion of the chain corresponds to 105–118; that stretch reads AAMTTVTFPKTSLK. The helical transmembrane segment at 119–139 threads the bilayer; sequence VLCVIANVISLFCALAGFFVI. Over 140 to 168 the chain is Extracellular; it reads AKDLFLEGPFPWPIWRPYPEPTTYIQRLE. Residues 169 to 189 traverse the membrane as a helical segment; it reads LTLFCFTFLEIFLSGSTAITA. Topologically, residues 190 to 267 are cytoplasmic; sequence YRMKRLQAED…LHTGPRTLRK (78 aa).

The protein belongs to the MS4A family. Expressed in thymus, kidney, colon, brain and testis. Expressed also by various hematopoietic and lymphoblastoid cell lines.

Its subcellular location is the membrane. May be involved in signal transduction as a component of a multimeric receptor complex. This Mus musculus (Mouse) protein is Membrane-spanning 4-domains subfamily A member 10 (Ms4a10).